Here is a 558-residue protein sequence, read N- to C-terminus: Receptor-like kinase LIP2 (558 aa).

Positions 1–45 (MHCFPCFSSPKNKKSSTTNETNDNNEPKPDDRRRAEETEEIEQSE) are disordered. A compositionally biased stretch (low complexity) spans 15-24 (SSTTNETNDN). Residues 25-36 (NEPKPDDRRRAE) show a composition bias toward basic and acidic residues. Residue T53 is modified to Phosphothreonine. The region spanning 64–343 (FRQECLLGEG…SDVMVALSFL (280 aa)) is the Protein kinase domain. ATP contacts are provided by residues 70-78 (LGEGGFGRV) and K93. Y138 bears the Phosphotyrosine mark. The Proton acceptor role is filled by D191. S195 and S227 each carry phosphoserine. The residue at position 233 (T233) is a Phosphothreonine. Y241 bears the Phosphotyrosine mark. Residues 372–558 (HDSNLVSPPP…SDVAIDSIKE (187 aa)) form a disordered region. Residues 401–418 (ESEKESVSKNEYKKKHEE) are compositionally biased toward basic and acidic residues. A compositionally biased stretch (acidic residues) spans 419 to 431 (EDSSMESDDESDS). Over residues 432–448 (NSEHEKDQPPKPIDEKN) the composition is skewed to basic and acidic residues. The span at 473 to 486 (SKSSQKSNDESTSS) shows a compositional bias: low complexity. 3 stretches are compositionally biased toward basic and acidic residues: residues 488–500 (YDSDRDQDEKGKE), 508–524 (EEKHTHIEHIDSSKTDD), and 547–558 (IKSDVAIDSIKE).

Belongs to the protein kinase superfamily. Ser/Thr protein kinase family. As to quaternary structure, interacts with PRK6. Post-translationally, palmitoylated. In terms of tissue distribution, expressed in mature pollen and in germinating pollen tubes.

The protein localises to the cell membrane. Its function is as follows. Involved in pollen tube guidance into micropyle. Participates in perception of the ovule-secreted peptide signal LURE1. This is Receptor-like kinase LIP2 from Arabidopsis thaliana (Mouse-ear cress).